The chain runs to 71 residues: Phosphatidylinositol N-acetylglucosaminyltransferase subunit Y (71 aa).

The Cytoplasmic portion of the chain corresponds to Met-1–Leu-3. Residues Ser-4–Val-26 form a helical membrane-spanning segment. Topologically, residues Glu-27 to Ser-44 are lumenal. The chain crosses the membrane as a helical span at residues Leu-45–Ile-65. Residues Lys-66–Asn-71 lie on the Cytoplasmic side of the membrane.

Component of the glycosylphosphatidylinositol-N-acetylglucosaminyltransferase (GPI-GnT) complex composed at least by PIGA, PIGC, PIGH, PIGP, PIGQ, PIGY and DPM2. Interacts directly with PIGA; this interaction regulates glycosylphosphatidylinositol-N-acetylglucosaminyltransferase activity. Does not interact with Ras proteins.

The protein resides in the endoplasmic reticulum membrane. Its pathway is glycolipid biosynthesis; glycosylphosphatidylinositol-anchor biosynthesis. Part of the glycosylphosphatidylinositol-N-acetylglucosaminyltransferase (GPI-GnT) complex that catalyzes the transfer of N-acetylglucosamine from UDP-N-acetylglucosamine to phosphatidylinositol and participates in the first step of GPI biosynthesis. May act by regulating the catalytic subunit PIGA. In Homo sapiens (Human), this protein is Phosphatidylinositol N-acetylglucosaminyltransferase subunit Y.